The following is a 131-amino-acid chain: MATRHQVRQAIVSLLYSNEINPVTAEFEDEFLEEKKIRNERKNEAQQTFKEVLANKEKLDEILKPHLKDGDFSKVGATELAILRLGLYEMKFSQTDKAVIINEAIELAKELGSDQAPKFINGVLDKIKGDL.

Belongs to the NusB family.

In terms of biological role, involved in transcription antitermination. Required for transcription of ribosomal RNA (rRNA) genes. Binds specifically to the boxA antiterminator sequence of the ribosomal RNA (rrn) operons. This Campylobacter concisus (strain 13826) protein is Transcription antitermination protein NusB.